We begin with the raw amino-acid sequence, 450 residues long: Equilibrative nucleotide transporter 1 (450 aa).

11 consecutive transmembrane segments (helical) span residues 63 to 83, 101 to 121, 133 to 153, 168 to 188, 196 to 216, 234 to 254, 300 to 320, 334 to 354, 361 to 381, 394 to 414, and 430 to 450; these read FAYI…NAFI, IFAV…VVFY, LGLL…LVYV, AAVA…IGVA, MQAV…LRIL, LYFA…NVAH, HGFG…GYIT, ILLI…TAVF, IAVG…GCLH, ILTC…MILA, and TVMF…FWVI.

This sequence belongs to the SLC29A/ENT transporter (TC 2.A.57) family. In terms of tissue distribution, in young seedlings, expressed in root elongation zone, root cortex, root-hair, at the transition to the shoot and cotyledons. Expressed in hydathodes of fully developed leaves and pollen.

It is found in the vacuole membrane. Functionally, nucleoside transporter involved in adenosine transport and required for nucleotide metabolism which influences growth and pollen germination. Has high affinity for adenosine when expressed in a heterologous system (yeast). This Arabidopsis thaliana (Mouse-ear cress) protein is Equilibrative nucleotide transporter 1 (ENT1).